The primary structure comprises 251 residues: 3-deoxy-manno-octulosonate cytidylyltransferase (251 aa).

It belongs to the KdsB family.

Its subcellular location is the cytoplasm. The catalysed reaction is 3-deoxy-alpha-D-manno-oct-2-ulosonate + CTP = CMP-3-deoxy-beta-D-manno-octulosonate + diphosphate. Its pathway is nucleotide-sugar biosynthesis; CMP-3-deoxy-D-manno-octulosonate biosynthesis; CMP-3-deoxy-D-manno-octulosonate from 3-deoxy-D-manno-octulosonate and CTP: step 1/1. It participates in bacterial outer membrane biogenesis; lipopolysaccharide biosynthesis. Functionally, activates KDO (a required 8-carbon sugar) for incorporation into bacterial lipopolysaccharide in Gram-negative bacteria. This is 3-deoxy-manno-octulosonate cytidylyltransferase from Alcanivorax borkumensis (strain ATCC 700651 / DSM 11573 / NCIMB 13689 / SK2).